The chain runs to 338 residues: Taste receptor type 2 member 39 (338 aa).

At 1–30 (MLGRCFPPNTKEKQQLRMIKLCDPAESELS) the chain is on the extracellular side. The chain crosses the membrane as a helical span at residues 31-51 (PFLITLTLAVLLAEYLTGIIA). The Cytoplasmic portion of the chain corresponds to 52 to 74 (NGFITAIHAAECVQNKSVSTSGR). The chain crosses the membrane as a helical span at residues 75-95 (ILVFLSVSRIALQSLMMLEIT). Over 96–116 (ISSTSLSFYSEDTVYYAFKIS) the chain is Extracellular. Residues 117-137 (FIFLNFCSLWFAAWLSFFYFV) form a helical membrane-spanning segment. Topologically, residues 138-156 (KIANFSYPLFLKLRWRISG) are cytoplasmic. Residues 157-177 (LIPWLLWLSVFISFSHSMFCI) form a helical membrane-spanning segment. Topologically, residues 178-205 (NICTGYCDNSFPIHSSNSTEKTYFSEIS) are extracellular. A glycan (N-linked (GlcNAc...) asparagine) is linked at Asn194. Residues 206–226 (VVSLAFFFNLGIVIPLIMFIL) form a helical membrane-spanning segment. At 227-262 (AAILLILSLKRHTLYMXSNATGSKDPSMEAHIGAIK) the chain is on the cytoplasmic side. Residues 263–283 (ATSYFLILYIFNAVALFIYLS) traverse the membrane as a helical segment. Over 284-291 (NMFDINSL) the chain is Extracellular. Residues 292–312 (WNTLCQIIMAAYPASHSILLI) form a helical membrane-spanning segment. Residues 313–338 (KDNPGLRRAWKQLQHRLHLYPKEWTL) lie on the Cytoplasmic side of the membrane.

Belongs to the G-protein coupled receptor T2R family.

The protein resides in the membrane. Functionally, receptor that may play a role in the perception of bitterness and is gustducin-linked. May play a role in sensing the chemical composition of the gastrointestinal content. The activity of this receptor may stimulate alpha gustducin, mediate PLC-beta-2 activation and lead to the gating of TRPM5. The protein is Taste receptor type 2 member 39 (TAS2R39) of Papio hamadryas (Hamadryas baboon).